A 314-amino-acid chain; its full sequence is MAFLEDGNHTAVTEFILLGLTDDPVLRVILFTIILCIYLVTVSGNLSTILLIRVSSQLHHPMYFFLSHVGSVDIGYSSSVTPNMLVNFLVEKHTIAYLGCGIQLSSAAFFGTAECFLLATMAYDRFVAICNPLLYSTKMSTQTCIQLVVGSYTGGILNASFAIISFFSFLFCGPNRINHFYCDFAPLVELSCSDINVSVVITTIFSASVTIITVFVIAISYTYILITILKMRSTEGRHKAFSTCTSYLTAVTLFYGTVTFIYVVPKSNYSTDQNKVASVFYIVVIPMLNPLIYSLRNNDIKGALKRQLGKKTFS.

Over 1–28 (MAFLEDGNHTAVTEFILLGLTDDPVLRV) the chain is Extracellular. N-linked (GlcNAc...) asparagine glycosylation occurs at Asn8. Residues 29–49 (ILFTIILCIYLVTVSGNLSTI) form a helical membrane-spanning segment. Over 50–57 (LLIRVSSQ) the chain is Cytoplasmic. A helical transmembrane segment spans residues 58-78 (LHHPMYFFLSHVGSVDIGYSS). The Extracellular segment spans residues 79–102 (SVTPNMLVNFLVEKHTIAYLGCGI). A disulfide bridge links Cys100 with Cys192. The chain crosses the membrane as a helical span at residues 103 to 123 (QLSSAAFFGTAECFLLATMAY). Residues 124–136 (DRFVAICNPLLYS) lie on the Cytoplasmic side of the membrane. The helical transmembrane segment at 137 to 157 (TKMSTQTCIQLVVGSYTGGIL) threads the bilayer. Over 158 to 199 (NASFAIISFFSFLFCGPNRINHFYCDFAPLVELSCSDINVSV) the chain is Extracellular. The chain crosses the membrane as a helical span at residues 200-220 (VITTIFSASVTIITVFVIAIS). Residues 221–240 (YTYILITILKMRSTEGRHKA) lie on the Cytoplasmic side of the membrane. The helical transmembrane segment at 241-261 (FSTCTSYLTAVTLFYGTVTFI) threads the bilayer. Over 262-274 (YVVPKSNYSTDQN) the chain is Extracellular. Asn268 is a glycosylation site (N-linked (GlcNAc...) asparagine). The helical transmembrane segment at 275-295 (KVASVFYIVVIPMLNPLIYSL) threads the bilayer. Residues 296–314 (RNNDIKGALKRQLGKKTFS) are Cytoplasmic-facing.

Belongs to the G-protein coupled receptor 1 family.

It is found in the cell membrane. Functionally, potential odorant receptor. In Mus musculus (Mouse), this protein is Olfactory receptor 5P67.